A 451-amino-acid polypeptide reads, in one-letter code: Methionine aminopeptidase 2-2 (451 aa).

The disordered stretch occupies residues 1 to 97; sequence MAAQVEDDVA…PRVLISDLFP (97 aa). Positions 19-28 are enriched in polar residues; it reads TKPTNGTSQP. A compositionally biased stretch (acidic residues) spans 35-45; sequence EAEDSDDDAEG. A compositionally biased stretch (basic residues) spans 60–73; the sequence is KKKKKRKPRKKKKA. Residues 74 to 83 show a composition bias toward low complexity; it reads GTSATAGAKS. Position 204 (His204) interacts with substrate. Asp224, Asp235, and His304 together coordinate a divalent metal cation. His312 lines the substrate pocket. 2 residues coordinate a divalent metal cation: Glu337 and Glu432.

This sequence belongs to the peptidase M24A family. Methionine aminopeptidase eukaryotic type 2 subfamily. Co(2+) serves as cofactor. It depends on Zn(2+) as a cofactor. Requires Mn(2+) as cofactor. The cofactor is Fe(2+).

It localises to the cytoplasm. The catalysed reaction is Release of N-terminal amino acids, preferentially methionine, from peptides and arylamides.. Functionally, cotranslationally removes the N-terminal methionine from nascent proteins. The N-terminal methionine is often cleaved when the second residue in the primary sequence is small and uncharged (Met-Ala-, Cys, Gly, Pro, Ser, Thr, or Val). This chain is Methionine aminopeptidase 2-2, found in Leptosphaeria maculans (strain JN3 / isolate v23.1.3 / race Av1-4-5-6-7-8) (Blackleg fungus).